Consider the following 101-residue polypeptide: Urinary protein 2 (101 aa).

A signal peptide spans 1-21 (MGKHILLLPLGLSLLMSSLLA). The 78-residue stretch at 22-99 (LQCFRCTSFD…CSATPFCNMV (78 aa)) folds into the UPAR/Ly6 domain. Intrachain disulfides connect cysteine 24/cysteine 51, cysteine 27/cysteine 36, cysteine 43/cysteine 70, cysteine 73/cysteine 89, and cysteine 90/cysteine 96. N-linked (GlcNAc...) asparagine glycans are attached at residues asparagine 67 and asparagine 74.

Post-translationally, N-glycosylated.

The protein resides in the secreted. In Rattus norvegicus (Rat), this protein is Urinary protein 2.